We begin with the raw amino-acid sequence, 607 residues long: UvrABC system protein C (607 aa).

One can recognise a GIY-YIG domain in the interval 16 to 94; that stretch reads GRPGVYRMFD…IKEWRPPYNI (79 aa). Residues 203–238 enclose the UVR domain; sequence NALSDELNATMEKAAMALDFERAAELRDQVALLRRV.

It belongs to the UvrC family. As to quaternary structure, interacts with UvrB in an incision complex.

It is found in the cytoplasm. The UvrABC repair system catalyzes the recognition and processing of DNA lesions. UvrC both incises the 5' and 3' sides of the lesion. The N-terminal half is responsible for the 3' incision and the C-terminal half is responsible for the 5' incision. The chain is UvrABC system protein C from Pseudomonas savastanoi pv. phaseolicola (strain 1448A / Race 6) (Pseudomonas syringae pv. phaseolicola (strain 1448A / Race 6)).